The following is a 481-amino-acid chain: ATP synthase subunit beta (481 aa).

160–167 (GGAGVGKT) contributes to the ATP binding site.

This sequence belongs to the ATPase alpha/beta chains family. As to quaternary structure, F-type ATPases have 2 components, CF(1) - the catalytic core - and CF(0) - the membrane proton channel. CF(1) has five subunits: alpha(3), beta(3), gamma(1), delta(1), epsilon(1). CF(0) has three main subunits: a(1), b(2) and c(9-12). The alpha and beta chains form an alternating ring which encloses part of the gamma chain. CF(1) is attached to CF(0) by a central stalk formed by the gamma and epsilon chains, while a peripheral stalk is formed by the delta and b chains.

It localises to the cell inner membrane. The enzyme catalyses ATP + H2O + 4 H(+)(in) = ADP + phosphate + 5 H(+)(out). Its function is as follows. Produces ATP from ADP in the presence of a proton gradient across the membrane. The catalytic sites are hosted primarily by the beta subunits. In Stigmatella aurantiaca, this protein is ATP synthase subunit beta.